The sequence spans 422 residues: L-cysteine:1D-myo-inositol 2-amino-2-deoxy-alpha-D-glucopyranoside ligase (422 aa).

The tract at residues 1–34 (MKSWSTPAPPTVPSRPDRLRLHDTATGRTRHPGN) is disordered. Over residues 15 to 25 (RPDRLRLHDTA) the composition is skewed to basic and acidic residues. Residue Cys44 participates in Zn(2+) binding. L-cysteinyl-5'-AMP contacts are provided by residues 44 to 47 (CGIT), Thr59, and 82 to 84 (NVT). The short motif at 46–56 (ITPYDATHLGH) is the 'HIGH' region element. A 'ERGGDP' region motif is present at residues 196 to 201 (ERGGDP). Trp237 lines the L-cysteinyl-5'-AMP pocket. A Zn(2+)-binding site is contributed by Cys241. L-cysteinyl-5'-AMP is bound at residue 259–261 (GSD). Zn(2+) is bound at residue His266. L-cysteinyl-5'-AMP is bound at residue Val292. The 'KMSKS' region signature appears at 298-302 (KMSKS).

This sequence belongs to the class-I aminoacyl-tRNA synthetase family. MshC subfamily. As to quaternary structure, monomer. The cofactor is Zn(2+).

It carries out the reaction 1D-myo-inositol 2-amino-2-deoxy-alpha-D-glucopyranoside + L-cysteine + ATP = 1D-myo-inositol 2-(L-cysteinylamino)-2-deoxy-alpha-D-glucopyranoside + AMP + diphosphate + H(+). Catalyzes the ATP-dependent condensation of GlcN-Ins and L-cysteine to form L-Cys-GlcN-Ins. In Micrococcus luteus (strain ATCC 4698 / DSM 20030 / JCM 1464 / CCM 169 / CCUG 5858 / IAM 1056 / NBRC 3333 / NCIMB 9278 / NCTC 2665 / VKM Ac-2230) (Micrococcus lysodeikticus), this protein is L-cysteine:1D-myo-inositol 2-amino-2-deoxy-alpha-D-glucopyranoside ligase.